A 291-amino-acid chain; its full sequence is 4-hydroxy-tetrahydrodipicolinate synthase (291 aa).

Thr-47 lines the pyruvate pocket. Tyr-134 serves as the catalytic Proton donor/acceptor. Lys-162 acts as the Schiff-base intermediate with substrate in catalysis. A pyruvate-binding site is contributed by Ile-205.

It belongs to the DapA family. As to quaternary structure, homotetramer; dimer of dimers.

The protein resides in the cytoplasm. It carries out the reaction L-aspartate 4-semialdehyde + pyruvate = (2S,4S)-4-hydroxy-2,3,4,5-tetrahydrodipicolinate + H2O + H(+). It participates in amino-acid biosynthesis; L-lysine biosynthesis via DAP pathway; (S)-tetrahydrodipicolinate from L-aspartate: step 3/4. In terms of biological role, catalyzes the condensation of (S)-aspartate-beta-semialdehyde [(S)-ASA] and pyruvate to 4-hydroxy-tetrahydrodipicolinate (HTPA). The chain is 4-hydroxy-tetrahydrodipicolinate synthase from Methanoculleus marisnigri (strain ATCC 35101 / DSM 1498 / JR1).